The chain runs to 375 residues: Succinyl-diaminopimelate desuccinylase (375 aa).

His-66 is a Zn(2+) binding site. Residue Asp-68 is part of the active site. Asp-99 is a binding site for Zn(2+). Glu-133 functions as the Proton acceptor in the catalytic mechanism. 3 residues coordinate Zn(2+): Glu-134, Glu-162, and His-348.

It belongs to the peptidase M20A family. DapE subfamily. As to quaternary structure, homodimer. Zn(2+) is required as a cofactor. Co(2+) serves as cofactor.

It carries out the reaction N-succinyl-(2S,6S)-2,6-diaminopimelate + H2O = (2S,6S)-2,6-diaminopimelate + succinate. The protein operates within amino-acid biosynthesis; L-lysine biosynthesis via DAP pathway; LL-2,6-diaminopimelate from (S)-tetrahydrodipicolinate (succinylase route): step 3/3. Its function is as follows. Catalyzes the hydrolysis of N-succinyl-L,L-diaminopimelic acid (SDAP), forming succinate and LL-2,6-diaminopimelate (DAP), an intermediate involved in the bacterial biosynthesis of lysine and meso-diaminopimelic acid, an essential component of bacterial cell walls. The protein is Succinyl-diaminopimelate desuccinylase of Janthinobacterium sp. (strain Marseille) (Minibacterium massiliensis).